The sequence spans 497 residues: ADP-dependent glucokinase (497 aa).

The first 22 residues, Met-1–Leu-22, serve as a signal peptide directing secretion. The 446-residue stretch at Ser-52 to Leu-497 folds into the ADPK domain. Positions 297, 328, and 481 each coordinate Mg(2+). The active-site Proton acceptor is Asp-481.

It belongs to the ADP-dependent glucokinase family. As to quaternary structure, monomer. It depends on Mg(2+) as a cofactor.

It localises to the secreted. The enzyme catalyses D-glucose + ADP = D-glucose 6-phosphate + AMP + H(+). Its pathway is carbohydrate degradation; glycolysis. Its function is as follows. Catalyzes the phosphorylation of D-glucose to D-glucose 6-phosphate using ADP as the phosphate donor. GDP and CDP can replace ADP, but with reduced efficiency. This chain is ADP-dependent glucokinase (ADPGK), found in Bos taurus (Bovine).